We begin with the raw amino-acid sequence, 401 residues long: Stearoyl-[acyl-carrier-protein] 9-desaturase 3, chloroplastic (401 aa).

Residues 1–31 (MSMALLLTSPAMKQKPAVITSPRRGSSPSRR) form a disordered region. The N-terminal 35 residues, 1 to 35 (MSMALLLTSPAMKQKPAVITSPRRGSSPSRRLRVS), are a transit peptide targeting the chloroplast. E140, E178, H181, E231, E264, and H267 together coordinate Fe cation.

It belongs to the fatty acid desaturase type 2 family. As to quaternary structure, homodimer. It depends on Fe(2+) as a cofactor. In terms of tissue distribution, ubiquitously expressed with a preference in leaves, flowers and stems.

Its subcellular location is the plastid. It is found in the chloroplast. It catalyses the reaction octadecanoyl-[ACP] + 2 reduced [2Fe-2S]-[ferredoxin] + O2 + 2 H(+) = (9Z)-octadecenoyl-[ACP] + 2 oxidized [2Fe-2S]-[ferredoxin] + 2 H2O. Its pathway is lipid metabolism; fatty acid metabolism. In terms of biological role, converts stearoyl-ACP to oleoyl-ACP by introduction of a cis double bond between carbons 9 and 10 of the acyl chain. Also able to convert palmitoyl-ACP to palmitoleoyl-ACP at the C9 position. Exhibits delta-9 palmitoyl-[acyl-carrier-protein] desaturase (PAD) activity. Involved in omega-7 monounsaturated fatty acid biosynthesis, especially in the endosperm oil. This chain is Stearoyl-[acyl-carrier-protein] 9-desaturase 3, chloroplastic (S-ACP-DES3), found in Arabidopsis thaliana (Mouse-ear cress).